A 64-amino-acid polypeptide reads, in one-letter code: Small ribosomal subunit protein eS17 (64 aa).

The protein belongs to the eukaryotic ribosomal protein eS17 family.

This chain is Small ribosomal subunit protein eS17, found in Halorubrum lacusprofundi (strain ATCC 49239 / DSM 5036 / JCM 8891 / ACAM 34).